Consider the following 42-residue polypeptide: Lanthionine-containing peptide SapB precursor RamS (42 aa).

Positions 1–21 (MNLFDLQSMETPKEEAMGDVE) are excised as a propeptide. The segment at 1-21 (MNLFDLQSMETPKEEAMGDVE) is disordered. Cross-links (lanthionine (Ser-Cys)) lie at residues 24–31 (SRASLLLC) and 34–41 (SSLSITTC). Residues Ser-27 and Ser-37 each carry the 2,3-didehydroalanine (Ser) modification.

This sequence belongs to the lanthionine-containing morphogen family. In terms of processing, maturation involves the enzymatic conversion of Ser into dehydrated AA and the formation of thioether bonds with cysteine, probably by RamC. This is followed by membrane translocation and cleavage of the modified precursor. The RamS precursor protein (detected by an anti-propeptide antibody and by a C-terminal His-tag) is detected from at least 16 hours post-germination; its apparent molecular weight decreases starting from about 34 hours, when its probable modifying enzyme ramC is transcribed. Surfactin, a B.subtilis cyclic lipopeptide antibiotic which prevents aerial hyphae formation in S.coelicolor, decreases localization of RamS precursor protein to the cell membrane, suggesting that processing only occurs at the cell membrane.

It localises to the cell membrane. The protein resides in the secreted. The protein localises to the spore wall. Functionally, stably accumulated precursor of SapB. In terms of biological role, lanthionine-containing peptide devoid of antibiotic properties. A surface active peptide involved in the efficient formation of aerial mycelium when cells are grown in rich media. Has an overlapping function with the surface-active chaplin proteins; chaplins are essential on minimal medium while on rich medium both chaplins and SapB are required for efficient aerial hyphae formation. Required under conditions of high osmolarity where it may change the physical properties of the chaplin layer to allow hyphae to grow into air. Suggested to self-assemble at air-water interfaces, thus providing a film of surfactant through which nascent aerial hyphae can emerge; the aerial hyphae differentiate further into spores. Application to bald mutants (bld, unable to make aerial hyphae) restores hyphae growth. Application to chaplin negative mutants as well as ramC-ramS-ramA-ramB and ramR deletions also restores aerial hyphae growth and sporulation. Reduces surface tension of water from 72 to 30 mJ/m(2). The polypeptide is Lanthionine-containing peptide SapB precursor RamS (ramS) (Streptomyces coelicolor (strain ATCC BAA-471 / A3(2) / M145)).